The chain runs to 234 residues: Octanoyltransferase (234 aa).

One can recognise a BPL/LPL catalytic domain in the interval 35–221 (DGAPELVWFL…AFQQVFASPL (187 aa)). Substrate-binding positions include 74–81 (RGGQYTYH), 150–152 (AIG), and 163–165 (GIS). Cysteine 181 (acyl-thioester intermediate) is an active-site residue.

The protein belongs to the LipB family.

The protein resides in the cytoplasm. It catalyses the reaction octanoyl-[ACP] + L-lysyl-[protein] = N(6)-octanoyl-L-lysyl-[protein] + holo-[ACP] + H(+). It functions in the pathway protein modification; protein lipoylation via endogenous pathway; protein N(6)-(lipoyl)lysine from octanoyl-[acyl-carrier-protein]: step 1/2. Its function is as follows. Catalyzes the transfer of endogenously produced octanoic acid from octanoyl-acyl-carrier-protein onto the lipoyl domains of lipoate-dependent enzymes. Lipoyl-ACP can also act as a substrate although octanoyl-ACP is likely to be the physiological substrate. The protein is Octanoyltransferase of Hyphomonas neptunium (strain ATCC 15444).